The following is a 502-amino-acid chain: Glycerol kinase (502 aa).

Threonine 13 lines the ADP pocket. The ATP site is built by threonine 13, threonine 14, and serine 15. Threonine 13 is a sn-glycerol 3-phosphate binding site. Arginine 17 lines the ADP pocket. Sn-glycerol 3-phosphate-binding residues include arginine 83, glutamate 84, tyrosine 136, and aspartate 246. Glycerol is bound by residues arginine 83, glutamate 84, tyrosine 136, aspartate 246, and glutamine 247. The ADP site is built by threonine 268 and glycine 311. Positions 268, 311, 315, and 412 each coordinate ATP. The ADP site is built by glycine 412 and asparagine 416.

Belongs to the FGGY kinase family.

The enzyme catalyses glycerol + ATP = sn-glycerol 3-phosphate + ADP + H(+). The protein operates within polyol metabolism; glycerol degradation via glycerol kinase pathway; sn-glycerol 3-phosphate from glycerol: step 1/1. Inhibited by fructose 1,6-bisphosphate (FBP). Functionally, key enzyme in the regulation of glycerol uptake and metabolism. Catalyzes the phosphorylation of glycerol to yield sn-glycerol 3-phosphate. The chain is Glycerol kinase from Francisella tularensis subsp. holarctica (strain FTNF002-00 / FTA).